A 592-amino-acid polypeptide reads, in one-letter code: PiggyBac transposable element-derived protein 2 (592 aa).

The segment at 31-69 (EEEESNNNREEIFIAPPDNAAGEFTDEDSGDEDSQRGAH) is disordered.

This Homo sapiens (Human) protein is PiggyBac transposable element-derived protein 2 (PGBD2).